We begin with the raw amino-acid sequence, 210 residues long: Cilia- and flagella-associated protein 418 (210 aa).

The interval 1 to 77 is required for interaction with FAM161A; the sequence is MAKDLDELLD…LINEIFEEPN (77 aa). Residues 24 to 59 form a disordered region; that stretch reads LDLGERPKGGSGGGGTHSGDRNGAQEKDTLRSTETF. Basic and acidic residues predominate over residues 41–59; it reads SGDRNGAQEKDTLRSTETF.

Interacts (via N-terminus) with FAM161A (via central region); the interaction is direct.

It localises to the cytoplasm. Its subcellular location is the photoreceptor inner segment. Its function is as follows. May be involved in photoreceptor outer segment disk morphogenesis. The chain is Cilia- and flagella-associated protein 418 from Rattus norvegicus (Rat).